The sequence spans 213 residues: Na(+)-translocating NADH-quinone reductase subunit E (213 aa).

The next 6 membrane-spanning stretches (helical) occupy residues 12–32, 40–60, 92–112, 124–144, 155–175, and 191–211; these read AVFV…FLAV, IGLG…NQLI, FLGF…LEMF, LGIF…SLFM, VVFG…LAGI, and LGIT…FSGI.

Belongs to the NqrDE/RnfAE family. Composed of six subunits; NqrA, NqrB, NqrC, NqrD, NqrE and NqrF.

It localises to the cell inner membrane. It carries out the reaction a ubiquinone + n Na(+)(in) + NADH + H(+) = a ubiquinol + n Na(+)(out) + NAD(+). Functionally, NQR complex catalyzes the reduction of ubiquinone-1 to ubiquinol by two successive reactions, coupled with the transport of Na(+) ions from the cytoplasm to the periplasm. NqrA to NqrE are probably involved in the second step, the conversion of ubisemiquinone to ubiquinol. The chain is Na(+)-translocating NADH-quinone reductase subunit E from Rhodopirellula baltica (strain DSM 10527 / NCIMB 13988 / SH1).